The chain runs to 131 residues: Peptide methionine sulfoxide reductase MsrB (131 aa).

Residues 8-130 (LDEWRSMLDP…NSVCIDLRPR (123 aa)) enclose the MsrB domain. Zn(2+) is bound by residues cysteine 47, cysteine 50, cysteine 96, and cysteine 99. The active-site Nucleophile is cysteine 119.

This sequence belongs to the MsrB Met sulfoxide reductase family. Zn(2+) is required as a cofactor.

The enzyme catalyses L-methionyl-[protein] + [thioredoxin]-disulfide + H2O = L-methionyl-(R)-S-oxide-[protein] + [thioredoxin]-dithiol. This chain is Peptide methionine sulfoxide reductase MsrB, found in Pseudomonas putida (strain GB-1).